The primary structure comprises 419 residues: UDP-N-acetylglucosamine 1-carboxyvinyltransferase (419 aa).

22 to 23 contacts phosphoenolpyruvate; the sequence is KN. Arg93 lines the UDP-N-acetyl-alpha-D-glucosamine pocket. Cys117 acts as the Proton donor in catalysis. Residue Cys117 is modified to 2-(S-cysteinyl)pyruvic acid O-phosphothioketal. Residues Asp307 and Ile329 each coordinate UDP-N-acetyl-alpha-D-glucosamine.

Belongs to the EPSP synthase family. MurA subfamily.

It localises to the cytoplasm. It catalyses the reaction phosphoenolpyruvate + UDP-N-acetyl-alpha-D-glucosamine = UDP-N-acetyl-3-O-(1-carboxyvinyl)-alpha-D-glucosamine + phosphate. It participates in cell wall biogenesis; peptidoglycan biosynthesis. Cell wall formation. Adds enolpyruvyl to UDP-N-acetylglucosamine. In Shewanella sp. (strain MR-7), this protein is UDP-N-acetylglucosamine 1-carboxyvinyltransferase.